A 323-amino-acid chain; its full sequence is tRNA U34 carboxymethyltransferase (323 aa).

Residues Lys91, Trp105, Lys110, Gly130, 181-182 (IE), Met196, Tyr200, and Arg315 contribute to the carboxy-S-adenosyl-L-methionine site.

It belongs to the class I-like SAM-binding methyltransferase superfamily. CmoB family. Homotetramer.

The enzyme catalyses carboxy-S-adenosyl-L-methionine + 5-hydroxyuridine(34) in tRNA = 5-carboxymethoxyuridine(34) in tRNA + S-adenosyl-L-homocysteine + H(+). In terms of biological role, catalyzes carboxymethyl transfer from carboxy-S-adenosyl-L-methionine (Cx-SAM) to 5-hydroxyuridine (ho5U) to form 5-carboxymethoxyuridine (cmo5U) at position 34 in tRNAs. The sequence is that of tRNA U34 carboxymethyltransferase from Edwardsiella ictaluri (strain 93-146).